A 308-amino-acid polypeptide reads, in one-letter code: Glycine--tRNA ligase alpha subunit (308 aa).

This sequence belongs to the class-II aminoacyl-tRNA synthetase family. In terms of assembly, tetramer of two alpha and two beta subunits.

Its subcellular location is the cytoplasm. It carries out the reaction tRNA(Gly) + glycine + ATP = glycyl-tRNA(Gly) + AMP + diphosphate. The protein is Glycine--tRNA ligase alpha subunit of Brevibacillus brevis (strain 47 / JCM 6285 / NBRC 100599).